Reading from the N-terminus, the 218-residue chain is 3-dehydroquinate dehydratase (218 aa).

Residues Glu-29–Arg-31 and Arg-56 each bind 3-dehydroquinate. The Proton donor/acceptor role is filled by His-116. The active-site Schiff-base intermediate with substrate is Lys-142. Positions 180, 200, and 204 each coordinate 3-dehydroquinate.

It belongs to the type-I 3-dehydroquinase family. Homodimer.

The catalysed reaction is 3-dehydroquinate = 3-dehydroshikimate + H2O. The protein operates within metabolic intermediate biosynthesis; chorismate biosynthesis; chorismate from D-erythrose 4-phosphate and phosphoenolpyruvate: step 3/7. In terms of biological role, involved in the third step of the chorismate pathway, which leads to the biosynthesis of aromatic amino acids. Catalyzes the cis-dehydration of 3-dehydroquinate (DHQ) and introduces the first double bond of the aromatic ring to yield 3-dehydroshikimate. This Methanococcus vannielii (strain ATCC 35089 / DSM 1224 / JCM 13029 / OCM 148 / SB) protein is 3-dehydroquinate dehydratase.